A 303-amino-acid polypeptide reads, in one-letter code: Rhomboid-related protein 2 (303 aa).

The segment at 20–39 (MKEELEEEEKMREDGGGKDR) is disordered. The segment covering 28–39 (EKMREDGGGKDR) has biased composition (basic and acidic residues). 7 helical membrane-spanning segments follow: residues 72–92 (PVFIISISLAELAVFIYYAVW), 128–148 (LVHAGVQHILGNLCMQLVLGI), 159–179 (VGLVYLAGVIAGSLASSIFDP), 183–203 (LVGASGGVYALMGGYFMNVLV), 212–232 (FGIFRLLIIILIIVLDMGFAL), 245–265 (VSFAAHIAGGFAGMSIGYTVF), and 278–298 (FWIAIAAYLACVLFAVFFNIF). Serine 187 serves as the catalytic Nucleophile. Residue histidine 250 is part of the active site.

Belongs to the peptidase S54 family. Proteolytic processing of the proenzyme produces a N-terminal fragment (NTF) and a C-terminal fragment (CTF). The processing is required for activation of the protease.

It is found in the cell membrane. It carries out the reaction Cleaves type-1 transmembrane domains using a catalytic dyad composed of serine and histidine that are contributed by different transmembrane domains.. Its function is as follows. Involved in regulated intramembrane proteolysis and the subsequent release of functional polypeptides from their membrane anchors. Known substrate: EFNB3. In Homo sapiens (Human), this protein is Rhomboid-related protein 2 (RHBDL2).